The primary structure comprises 657 residues: Polycomb protein suz12-A (657 aa).

A disordered region spans residues 335-363 (TAPVAKPLATRNSESSTVDSSKTSNIKPP). Residues 347-358 (SESSTVDSSKTS) show a composition bias toward low complexity. The C2H2-type zinc-finger motif lies at 413-436 (LHCPWCTLNCRKLYSLLKHLKLSH). The segment at 528–604 (RLYFHSDSCT…NQMNQACMSF (77 aa)) is VEFS-box.

This sequence belongs to the VEFS (VRN2-EMF2-FIS2-SU(Z)12) family. Component of the prc2/eed-ezh2 complex.

It localises to the nucleus. Functionally, polycomb group (PcG) protein. Component of the prc2/eed-ezh2 complex, which methylates 'Lys-9' and 'Lys-27' of histone H3, leading to transcriptional repression of the affected target gene. The polypeptide is Polycomb protein suz12-A (suz12a) (Danio rerio (Zebrafish)).